The chain runs to 505 residues: Trans-cinnamate 4-monooxygenase (505 aa).

A helical transmembrane segment spans residues Leu-3–Ile-23. (E)-cinnamate-binding positions include Arg-213–Gln-218 and Ala-306. A heme-binding site is contributed by Cys-447.

This sequence belongs to the cytochrome P450 family. Requires heme as cofactor.

The protein resides in the membrane. It catalyses the reaction (E)-cinnamate + reduced [NADPH--hemoprotein reductase] + O2 = (E)-4-coumarate + oxidized [NADPH--hemoprotein reductase] + H2O + H(+). Its pathway is phenylpropanoid metabolism; trans-4-coumarate biosynthesis; trans-4-coumarate from trans-cinnamate: step 1/1. Functionally, catalyzes the first oxidative step of the phenylpropanoid pathway in higher plants by transforming trans-cinnamate into p-coumarate. The compounds formed by this pathway are essential components for lignification, pollination, and defense against ultraviolet light, predators and pathogens. In Zinnia elegans (Garden zinnia), this protein is Trans-cinnamate 4-monooxygenase (CYP73A12).